We begin with the raw amino-acid sequence, 366 residues long: ERCC4 domain-containing protein EP364R (366 aa).

The ERCC4 domain maps to 3 to 101; the sequence is FLVADHREHH…QLYFFVEGPA (99 aa). Composition is skewed to polar residues over residues 320–331 and 349–366; these read RPTMQVATQPAA and PTGHQTLSKEMSLNTVRC. The tract at residues 320–366 is disordered; that stretch reads RPTMQVATQPAATQPLHKVSDDASSDASSPTGHQTLSKEMSLNTVRC.

Belongs to the asfivirus EP364R family.

Its function is as follows. Plays a role in the inhibition of type I interferon signaling pathway. Mechanistically, specifically interacts with 2',3'-cGAMP and cleaves it via its phosphodiesterase activity. In turn, prevents 2',3'-cGAMP interaction with host ER-resident STING1 leading to inhibition of downstream signaling pathway and type I interferon production. The chain is ERCC4 domain-containing protein EP364R from Ornithodoros (relapsing fever ticks).